A 496-amino-acid chain; its full sequence is Bifunctional protein HldE (496 aa).

Residues 1–335 are ribokinase; the sequence is MIKHNPPSPE…GALFRSHGPT (335 aa). 211–214 contributes to the ATP binding site; sequence NRKE. The active site involves aspartate 280. Residues 363–496 are cytidylyltransferase; sequence FTNGCFDILH…IGKLRAGSTS (134 aa).

It in the N-terminal section; belongs to the carbohydrate kinase PfkB family. This sequence in the C-terminal section; belongs to the cytidylyltransferase family. As to quaternary structure, homodimer.

It catalyses the reaction D-glycero-beta-D-manno-heptose 7-phosphate + ATP = D-glycero-beta-D-manno-heptose 1,7-bisphosphate + ADP + H(+). The catalysed reaction is D-glycero-beta-D-manno-heptose 1-phosphate + ATP + H(+) = ADP-D-glycero-beta-D-manno-heptose + diphosphate. Its pathway is nucleotide-sugar biosynthesis; ADP-L-glycero-beta-D-manno-heptose biosynthesis; ADP-L-glycero-beta-D-manno-heptose from D-glycero-beta-D-manno-heptose 7-phosphate: step 1/4. The protein operates within nucleotide-sugar biosynthesis; ADP-L-glycero-beta-D-manno-heptose biosynthesis; ADP-L-glycero-beta-D-manno-heptose from D-glycero-beta-D-manno-heptose 7-phosphate: step 3/4. Its function is as follows. Catalyzes the phosphorylation of D-glycero-D-manno-heptose 7-phosphate at the C-1 position to selectively form D-glycero-beta-D-manno-heptose-1,7-bisphosphate. Catalyzes the ADP transfer from ATP to D-glycero-beta-D-manno-heptose 1-phosphate, yielding ADP-D-glycero-beta-D-manno-heptose. The polypeptide is Bifunctional protein HldE (Mesorhizobium japonicum (strain LMG 29417 / CECT 9101 / MAFF 303099) (Mesorhizobium loti (strain MAFF 303099))).